The chain runs to 71 residues: Large ribosomal subunit protein bL31 (71 aa).

The Zn(2+) site is built by Cys16, Cys18, Cys36, and Cys39.

Belongs to the bacterial ribosomal protein bL31 family. Type A subfamily. In terms of assembly, part of the 50S ribosomal subunit. Requires Zn(2+) as cofactor.

Its function is as follows. Binds the 23S rRNA. This chain is Large ribosomal subunit protein bL31, found in Petrotoga mobilis (strain DSM 10674 / SJ95).